Here is a 198-residue protein sequence, read N- to C-terminus: DNA damage response protein D (198 aa).

Residues 124 to 198 form a disordered region; the sequence is SAAPTDPAGP…SEAGENTPAA (75 aa). Over residues 136–180 the composition is skewed to basic and acidic residues; the sequence is PGTDRAERTAAERTASERATHDRASTERPARPRRSAEPEAVRTED.

Appears to contribute to D.radiodurans capacity to survive exposure to ionizing radiation. May play a role in DNA repair and genome reconstitution. The polypeptide is DNA damage response protein D (ddrD) (Deinococcus radiodurans (strain ATCC 13939 / DSM 20539 / JCM 16871 / CCUG 27074 / LMG 4051 / NBRC 15346 / NCIMB 9279 / VKM B-1422 / R1)).